Consider the following 147-residue polypeptide: MAAQRLGKRVLSKLQSPSRARGPGGSPSGLQKRHARVTVKYDRRELQRRLDVEKWIDGRLEELYRGREADMPDEVNIDELLELDSEEERCRKIRGLLEACLNPTEDFVQELLAKLRGLHKQPGFPQPSPSDDPSLSPRQDPAHTAPP.

Residues 1-11 (MAAQRLGKRVL) are compositionally biased toward basic residues. Residues 1-37 (MAAQRLGKRVLSKLQSPSRARGPGGSPSGLQKRHARV) form a disordered region. A Phosphoserine modification is found at serine 26. Residues 35-120 (ARVTVKYDRR…LLAKLRGLHK (86 aa)) are inhibitory. Threonine 38 carries the phosphothreonine modification. The interval 118-147 (LHKQPGFPQPSPSDDPSLSPRQDPAHTAPP) is disordered. Phosphoserine is present on residues serine 128, serine 134, and serine 136.

The protein belongs to the PP1 inhibitor family.

The protein localises to the cytoplasm. In terms of biological role, inhibitor of PPP1CA. Has over 1000-fold higher inhibitory activity when phosphorylated, creating a molecular switch for regulating the phosphorylation status of PPP1CA substrates and smooth muscle contraction. This Rattus norvegicus (Rat) protein is Protein phosphatase 1 regulatory subunit 14A (Ppp1r14a).